Reading from the N-terminus, the 255-residue chain is Imidazole glycerol phosphate synthase subunit HisF (255 aa).

Residues D12 and D131 contribute to the active site.

It belongs to the HisA/HisF family. In terms of assembly, heterodimer of HisH and HisF.

The protein localises to the cytoplasm. The catalysed reaction is 5-[(5-phospho-1-deoxy-D-ribulos-1-ylimino)methylamino]-1-(5-phospho-beta-D-ribosyl)imidazole-4-carboxamide + L-glutamine = D-erythro-1-(imidazol-4-yl)glycerol 3-phosphate + 5-amino-1-(5-phospho-beta-D-ribosyl)imidazole-4-carboxamide + L-glutamate + H(+). It functions in the pathway amino-acid biosynthesis; L-histidine biosynthesis; L-histidine from 5-phospho-alpha-D-ribose 1-diphosphate: step 5/9. Functionally, IGPS catalyzes the conversion of PRFAR and glutamine to IGP, AICAR and glutamate. The HisF subunit catalyzes the cyclization activity that produces IGP and AICAR from PRFAR using the ammonia provided by the HisH subunit. The sequence is that of Imidazole glycerol phosphate synthase subunit HisF from Neisseria gonorrhoeae (strain ATCC 700825 / FA 1090).